We begin with the raw amino-acid sequence, 264 residues long: 3-deoxy-manno-octulosonate cytidylyltransferase (264 aa).

This sequence belongs to the KdsB family.

The protein resides in the cytoplasm. It catalyses the reaction 3-deoxy-alpha-D-manno-oct-2-ulosonate + CTP = CMP-3-deoxy-beta-D-manno-octulosonate + diphosphate. It participates in nucleotide-sugar biosynthesis; CMP-3-deoxy-D-manno-octulosonate biosynthesis; CMP-3-deoxy-D-manno-octulosonate from 3-deoxy-D-manno-octulosonate and CTP: step 1/1. The protein operates within bacterial outer membrane biogenesis; lipopolysaccharide biosynthesis. Functionally, activates KDO (a required 8-carbon sugar) for incorporation into bacterial lipopolysaccharide in Gram-negative bacteria. The polypeptide is 3-deoxy-manno-octulosonate cytidylyltransferase (Methylibium petroleiphilum (strain ATCC BAA-1232 / LMG 22953 / PM1)).